A 297-amino-acid polypeptide reads, in one-letter code: Protease HtpX homolog (297 aa).

2 helical membrane-spanning segments follow: residues 14–34 (VILL…AGYL) and 39–59 (YQLG…SMIF). H143 is a Zn(2+) binding site. The active site involves E144. Zn(2+) is bound at residue H147. The next 2 membrane-spanning stretches (helical) occupy residues 158-178 (IAVA…RMMW) and 193-213 (GFGA…PLAA). E225 serves as a coordination point for Zn(2+).

Belongs to the peptidase M48B family. Zn(2+) serves as cofactor.

It localises to the cell membrane. The polypeptide is Protease HtpX homolog (Streptococcus equi subsp. equi (strain 4047)).